The chain runs to 103 residues: MYAVIKTGGKQYRVAAGEKIKVEQIAAEVGQEIVIDQVLAVGNGAELKVGTPLVSGATVKATVVAHGKHDKVRIFKMRRRKHYQKRQGHRQQFTELQIQAIAA.

Belongs to the bacterial ribosomal protein bL21 family. As to quaternary structure, part of the 50S ribosomal subunit. Contacts protein L20.

This protein binds to 23S rRNA in the presence of protein L20. The sequence is that of Large ribosomal subunit protein bL21 from Acidovorax ebreus (strain TPSY) (Diaphorobacter sp. (strain TPSY)).